A 413-amino-acid chain; its full sequence is Serine/threonine transporter SstT (413 aa).

9 helical membrane passes run 21 to 41, 61 to 81, 89 to 109, 146 to 166, 189 to 209, 224 to 244, 305 to 325, 337 to 357, and 363 to 383; these read IGLL…SALG, SVAP…KKVG, IIYL…FASF, ITAL…GLGI, IVHF…ASTL, LAVL…IIVF, MGGA…TLGI, LVAS…LLLI, and LFGI…IIGV.

This sequence belongs to the dicarboxylate/amino acid:cation symporter (DAACS) (TC 2.A.23) family.

The protein localises to the cell inner membrane. It carries out the reaction L-serine(in) + Na(+)(in) = L-serine(out) + Na(+)(out). The enzyme catalyses L-threonine(in) + Na(+)(in) = L-threonine(out) + Na(+)(out). In terms of biological role, involved in the import of serine and threonine into the cell, with the concomitant import of sodium (symport system). This is Serine/threonine transporter SstT from Mannheimia succiniciproducens (strain KCTC 0769BP / MBEL55E).